A 120-amino-acid polypeptide reads, in one-letter code: Large ribosomal subunit protein uL18 (120 aa).

It belongs to the universal ribosomal protein uL18 family. As to quaternary structure, part of the 50S ribosomal subunit; part of the 5S rRNA/L5/L18/L25 subcomplex. Contacts the 5S and 23S rRNAs.

Its function is as follows. This is one of the proteins that bind and probably mediate the attachment of the 5S RNA into the large ribosomal subunit, where it forms part of the central protuberance. In Bacillus pumilus (strain SAFR-032), this protein is Large ribosomal subunit protein uL18.